The chain runs to 347 residues: NADH-ubiquinone oxidoreductase chain 2 (347 aa).

11 helical membrane-spanning segments follow: residues Pro-3–Ser-23, His-25–Met-45, Tyr-59–Met-79, Ile-96–Pro-116, Ile-122–Leu-142, Val-148–Gly-168, Ile-178–Pro-198, Leu-202–Ala-222, Ile-240–Phe-260, Ile-276–Leu-296, and Leu-326–Leu-346.

This sequence belongs to the complex I subunit 2 family. As to quaternary structure, core subunit of respiratory chain NADH dehydrogenase (Complex I) which is composed of 45 different subunits. Interacts with TMEM242.

Its subcellular location is the mitochondrion inner membrane. The enzyme catalyses a ubiquinone + NADH + 5 H(+)(in) = a ubiquinol + NAD(+) + 4 H(+)(out). In terms of biological role, core subunit of the mitochondrial membrane respiratory chain NADH dehydrogenase (Complex I) which catalyzes electron transfer from NADH through the respiratory chain, using ubiquinone as an electron acceptor. Essential for the catalytic activity and assembly of complex I. The sequence is that of NADH-ubiquinone oxidoreductase chain 2 from Peropteryx kappleri (Greater dog-like bat).